Here is a 412-residue protein sequence, read N- to C-terminus: Thyroxine-binding globulin (412 aa).

The first 16 residues, 1 to 16 (MPLFLYMVLLVLGIHC), serve as a signal peptide directing secretion. 5 N-linked (GlcNAc...) asparagine glycosylation sites follow: N20, N35, N98, N164, and N252. The thyroxine site is built by N292 and K395.

This sequence belongs to the serpin family. Expressed by the liver and secreted in plasma.

The protein resides in the secreted. Major thyroid hormone transport protein in serum. In Sus scrofa (Pig), this protein is Thyroxine-binding globulin (SERPINA7).